The following is a 614-amino-acid chain: Glutamine--fructose-6-phosphate aminotransferase [isomerizing] (614 aa).

C2 acts as the Nucleophile; for GATase activity in catalysis. Positions 2–221 constitute a Glutamine amidotransferase type-2 domain; sequence CGIVGYIGKR…DGEIAVINRG (220 aa). 2 SIS domains span residues 291-430 and 463-604; these read YKEK…EKGT and LSKT…VDQP. K609 acts as the For Fru-6P isomerization activity in catalysis.

Homodimer.

The protein resides in the cytoplasm. It catalyses the reaction D-fructose 6-phosphate + L-glutamine = D-glucosamine 6-phosphate + L-glutamate. In terms of biological role, catalyzes the first step in hexosamine metabolism, converting fructose-6P into glucosamine-6P using glutamine as a nitrogen source. The chain is Glutamine--fructose-6-phosphate aminotransferase [isomerizing] from Bacteroides thetaiotaomicron (strain ATCC 29148 / DSM 2079 / JCM 5827 / CCUG 10774 / NCTC 10582 / VPI-5482 / E50).